A 370-amino-acid chain; its full sequence is Phospho-N-acetylmuramoyl-pentapeptide-transferase (370 aa).

11 helical membrane passes run Pro21–Ile41, Leu46–Ile66, Pro92–Leu112, Phe117–Ile137, Leu151–Ile171, Ile181–Phe201, Asp217–Ile237, Asn243–Phe263, Val270–Leu290, Leu298–Phe318, and Thr349–Leu369.

This sequence belongs to the glycosyltransferase 4 family. MraY subfamily. It depends on Mg(2+) as a cofactor.

The protein localises to the cell inner membrane. It carries out the reaction UDP-N-acetyl-alpha-D-muramoyl-L-alanyl-gamma-D-glutamyl-meso-2,6-diaminopimeloyl-D-alanyl-D-alanine + di-trans,octa-cis-undecaprenyl phosphate = di-trans,octa-cis-undecaprenyl diphospho-N-acetyl-alpha-D-muramoyl-L-alanyl-D-glutamyl-meso-2,6-diaminopimeloyl-D-alanyl-D-alanine + UMP. Its pathway is cell wall biogenesis; peptidoglycan biosynthesis. Its function is as follows. Catalyzes the initial step of the lipid cycle reactions in the biosynthesis of the cell wall peptidoglycan: transfers peptidoglycan precursor phospho-MurNAc-pentapeptide from UDP-MurNAc-pentapeptide onto the lipid carrier undecaprenyl phosphate, yielding undecaprenyl-pyrophosphoryl-MurNAc-pentapeptide, known as lipid I. The sequence is that of Phospho-N-acetylmuramoyl-pentapeptide-transferase from Prochlorococcus marinus (strain SARG / CCMP1375 / SS120).